A 457-amino-acid polypeptide reads, in one-letter code: Oxygen-independent coproporphyrinogen III oxidase (457 aa).

A Radical SAM core domain is found at 47–280; it reads RYPERPLSLY…QETIVSLTQA (234 aa). Tyrosine 56 provides a ligand contact to S-adenosyl-L-methionine. Residues cysteine 62 and cysteine 66 each contribute to the [4Fe-4S] cluster site. Phenylalanine 68 is a binding site for S-adenosyl-L-methionine. Position 69 (cysteine 69) interacts with [4Fe-4S] cluster. S-adenosyl-L-methionine-binding positions include glycine 112, 113–114, glutamate 145, glutamine 172, arginine 184, aspartate 209, alanine 243, and isoleucine 329; that span reads GT.

Belongs to the anaerobic coproporphyrinogen-III oxidase family. In terms of assembly, monomer. Requires [4Fe-4S] cluster as cofactor.

Its subcellular location is the cytoplasm. It carries out the reaction coproporphyrinogen III + 2 S-adenosyl-L-methionine = protoporphyrinogen IX + 2 5'-deoxyadenosine + 2 L-methionine + 2 CO2. It functions in the pathway porphyrin-containing compound metabolism; protoporphyrin-IX biosynthesis; protoporphyrinogen-IX from coproporphyrinogen-III (AdoMet route): step 1/1. Involved in the heme biosynthesis. Catalyzes the anaerobic oxidative decarboxylation of propionate groups of rings A and B of coproporphyrinogen III to yield the vinyl groups in protoporphyrinogen IX. This chain is Oxygen-independent coproporphyrinogen III oxidase (hemN), found in Salmonella typhi.